We begin with the raw amino-acid sequence, 322 residues long: MWEKVDQLTPSRYSPYRFFSAQEWAAFRADTPLTLTYEEVKRLRSLGDPIDLDEVRRIYLSLSRLLYAHVEASQLLFRQRQQFLNMEESYKTPFIIGVAGSVAVGKSTMARILKELLARWPSSPKVDLVTTDGFLYPNAVLREQNMMERKGFPESYDIGAVLRFLSAIKAGMSRVRAPLYSHLSYDVLPGEYQIVDKPDILIFEGINVLQVRDLPEDGKMVPFVSDFFDFSIYIDADPRLIHKWYIDRFMRLRETAFRDPQSFFHRYSQLSQEAARSIAEGLWQNINLKNLNENILPTRPRADLILRKGSDHLIEEVALRKI.

Residue 100–107 (GSVAVGKS) coordinates ATP.

It belongs to the prokaryotic pantothenate kinase family.

The protein localises to the cytoplasm. It catalyses the reaction (R)-pantothenate + ATP = (R)-4'-phosphopantothenate + ADP + H(+). It functions in the pathway cofactor biosynthesis; coenzyme A biosynthesis; CoA from (R)-pantothenate: step 1/5. This chain is Pantothenate kinase, found in Brucella canis (strain ATCC 23365 / NCTC 10854 / RM-666).